Reading from the N-terminus, the 203-residue chain is MVRLNVKPTRMELNNLKERLKTAERGHKLLKDKRDELMRRFISLIRENNQLRKEVESYLIDNLKAFAVAKSLKNSLMVEELFSIPSKEIELFVEKENIMSVTVPRMHMNITSQNENSEYSYLSSNSEMDDVFATMNSLIDKLLRLAEVEKTCQLMADEIEKTRRRVNGLEYSIIPNLSETIHYIELKLEEAERANLVRIMKVK.

Belongs to the V-ATPase D subunit family.

Its function is as follows. Produces ATP from ADP in the presence of a proton gradient across the membrane. This chain is V-type ATP synthase subunit D, found in Streptococcus pneumoniae (strain Hungary19A-6).